A 312-amino-acid chain; its full sequence is Non-structural protein 12A (312 aa).

Residues 1–23 (MFKSGSGSLKRSGSISSVKSFSG) show a composition bias toward low complexity. Disordered regions lie at residues 1–37 (MFKS…RGSV), 63–97 (VPEK…YNQN), and 114–162 (KGRG…TGDG). Residues 63 to 73 (VPEKTKSEGNL) show a composition bias toward basic and acidic residues. Positions 74-97 (KNKSSVITGNFESSGPTNAHYNQN) are enriched in polar residues. Residues 122–134 (DARHTATDSRLSQ) show a composition bias toward basic and acidic residues.

It belongs to the phytoreovirus non-structural protein Pns12A family.

The protein localises to the host cytoplasm. In terms of biological role, constituent of viral factories. The protein is Non-structural protein 12A of Rice dwarf virus (isolate Fujian) (RDV).